Consider the following 356-residue polypeptide: Nuclear hormone receptor family member nhr-42 (356 aa).

The segment at residues 7-82 is a DNA-binding region (nuclear receptor); sequence SQTCLICGDS…VGMRESAVLS (76 aa). Residues 10-30 form an NR C4-type zinc finger; it reads CLICGDSADSLHFGALSCRAC. The NR C4-type; atypical zinc finger occupies 48–70; the sequence is CDRQCKVDTGMRKLCASCRYDKC. The region spanning 108–356 is the NR LBD domain; it reads TSDSVLENLQ…HSSIFGNMAE (249 aa).

It belongs to the nuclear hormone receptor family.

It is found in the nucleus. Its function is as follows. Orphan nuclear receptor. The protein is Nuclear hormone receptor family member nhr-42 (nhr-42) of Caenorhabditis elegans.